We begin with the raw amino-acid sequence, 529 residues long: Lysophosphatidylcholine acyltransferase 2 (529 aa).

Topologically, residues Met-1 to Arg-50 are cytoplasmic. Residues Ala-51–Gly-71 traverse the membrane as a helical; Signal-anchor for type II membrane protein segment. At Gln-72 to Asp-529 the chain is on the lumenal side. The HXXXXD motif motif lies at His-128–Asp-133. An EGTC motif motif is present at residues Glu-202–Cys-205. Residue Asn-207 is glycosylated (N-linked (GlcNAc...) asparagine). EF-hand domains follow at residues Pro-373–Pro-408, Asn-410–Val-445, and Asp-449–Tyr-480. Ca(2+) is bound by residues Asp-386, Asn-388, Asp-390, Thr-392, Glu-397, Asp-423, Asp-425, Asp-427, Cys-429, Glu-434, Asp-458, Asp-460, Ser-462, His-464, and Glu-469.

The protein belongs to the 1-acyl-sn-glycerol-3-phosphate acyltransferase family.

The protein localises to the endoplasmic reticulum membrane. The protein resides in the golgi apparatus membrane. Its subcellular location is the cell membrane. It localises to the lipid droplet. It catalyses the reaction a 1-acyl-sn-glycero-3-phosphocholine + an acyl-CoA = a 1,2-diacyl-sn-glycero-3-phosphocholine + CoA. It carries out the reaction a 1-O-alkyl-sn-glycero-3-phosphocholine + acetyl-CoA = a 1-O-alkyl-2-acetyl-sn-glycero-3-phosphocholine + CoA. The catalysed reaction is a 1-acyl-sn-glycero-3-phosphate + an acyl-CoA = a 1,2-diacyl-sn-glycero-3-phosphate + CoA. The enzyme catalyses a 1-O-(1Z-alkenyl)-sn-glycero-3-phosphocholine + an acyl-CoA = a 1-O-(1Z-alkenyl)-2-acyl-sn-glycero-3-phosphocholine + CoA. It catalyses the reaction 1-hexadecanoyl-sn-glycero-3-phosphate + (9Z)-octadecenoyl-CoA = 1-hexadecanoyl-2-(9Z-octadecenoyl)-sn-glycero-3-phosphate + CoA. It carries out the reaction 1-(9Z-octadecenoyl)-sn-glycero-3-phosphate + (9Z)-octadecenoyl-CoA = 1,2-di-(9Z-octadecenoyl)-sn-glycero-3-phosphate + CoA. The catalysed reaction is 1-(9Z-octadecenoyl)-sn-glycero-3-phosphate + hexadecanoyl-CoA = 1-(9Z)-octadecenoyl-2-hexadecanoyl-sn-glycero-3-phosphate + CoA. The enzyme catalyses 1-heptadecanoyl-sn-glycero-3-phosphate + (9Z)-octadecenoyl-CoA = 1-heptadecanoyl-2-(9Z)-octadecenoyl-sn-glycero-3-phosphate + CoA. It catalyses the reaction 1-octadecanoyl-sn-glycero-3-phosphate + (9Z)-octadecenoyl-CoA = 1-octadecanoyl-2-(9Z-octadecenoyl)-sn-glycero-3-phosphate + CoA. It carries out the reaction heptadecanoyl-CoA + 1-(9Z-octadecenoyl)-sn-glycero-3-phosphate = 1-(9Z)-octadecenoyl-2-heptadecanoyl-sn-glycero-3-phosphate + CoA. The catalysed reaction is 1-(9Z-octadecenoyl)-sn-glycero-3-phosphate + (9Z,12Z)-octadecadienoyl-CoA = 1-(9Z)-octadecenoyl-2-(9Z,12Z)-octadecadienoyl-sn-glycero-3-phosphate + CoA. The enzyme catalyses 1-(9Z-octadecenoyl)-sn-glycero-3-phosphate + tetradecanoyl-CoA = 1-(9Z)-octadecenoyl-2-tetradecanoyl-sn-glycero-3-phosphate + CoA. It catalyses the reaction pentadecanoyl-CoA + 1-(9Z-octadecenoyl)-sn-glycero-3-phosphate = 1-(9Z)-octadecenoyl-2-pentadecanoyl-sn-glycero-3-phosphate + CoA. It carries out the reaction nonadecanoyl-CoA + 1-(9Z-octadecenoyl)-sn-glycero-3-phosphate = 1-(9Z)-octadecenoyl-2-nonadecanoyl-sn-glycero-3-phosphate + CoA. The catalysed reaction is 1-hexadecanoyl-sn-glycero-3-phosphocholine + (9Z)-octadecenoyl-CoA = 1-hexadecanoyl-2-(9Z-octadecenoyl)-sn-glycero-3-phosphocholine + CoA. The enzyme catalyses 1-O-hexadecyl-sn-glycero-3-phosphocholine + acetyl-CoA = 1-O-hexadecyl-2-acetyl-sn-glycero-3-phosphocholine + CoA. It catalyses the reaction 1-O-octadecyl-sn-glycero-3-phosphocholine + acetyl-CoA = 1-O-octadecyl-2-acetyl-sn-glycero-3-phosphocholine + CoA. It carries out the reaction 1-hexadecanoyl-sn-glycero-3-phosphocholine + acetyl-CoA = 1-hexadecanoyl-2-acetyl-sn-glycero-3-phosphocholine + CoA. The catalysed reaction is 1-octadecanoyl-sn-glycero-3-phosphocholine + acetyl-CoA = 1-octadecanoyl-2-acetyl-sn-glycero-3-phosphocholine + CoA. The enzyme catalyses a 1-O-(1Z-alkenyl)-sn-glycero-3-phosphocholine + acetyl-CoA = 1-O-(1Z)-alkenyl-2-acetyl-sn-glycero-3-phosphocholine + CoA. It catalyses the reaction 1-O-octadecyl-sn-glycero-3-phosphocholine + (5Z,8Z,11Z,14Z)-eicosatetraenoyl-CoA = 1-O-octadecyl-2-(5Z,8Z,11Z,14Z)-eicosatetraenoyl-sn-glycero-3-phosphocholine + CoA. It functions in the pathway lipid metabolism; phospholipid metabolism. Exhibits both acyltransferase and acetyltransferase activities. Activity is calcium-dependent. Catalyzes the conversion of lysophosphatidylcholine (1-acyl-sn-glycero-3-phosphocholine or LPC) into phosphatidylcholine (1,2-diacyl-sn-glycero-3-phosphocholine or PC). Catalyzes the conversion 1-acyl-sn-glycerol-3-phosphate (lysophosphatidic acid or LPA) into 1,2-diacyl-sn-glycerol-3-phosphate (phosphatidic acid or PA) by incorporating an acyl moiety at the sn-2 position of the glycerol backbone. Involved in platelet-activating factor (PAF) biosynthesis by catalyzing the conversion of the PAF precursor, 1-O-alkyl-sn-glycero-3-phosphocholine (lyso-PAF) into 1-O-alkyl-2-acetyl-sn-glycero-3-phosphocholine (PAF). The protein is Lysophosphatidylcholine acyltransferase 2 (lpcat2) of Danio rerio (Zebrafish).